Here is a 197-residue protein sequence, read N- to C-terminus: Protein tyrosine phosphatase receptor type C-associated protein (197 aa).

A helical membrane pass occupies residues 33 to 53 (VVTIVLLLLLLLLLVTALALA). Phosphoserine is present on residues Ser99 and Ser103. Disordered stretches follow at residues 120–164 (GPEE…GSSA) and 177–197 (SAAW…VTAL). The span at 124–145 (AAAKEEEQRCQAEQTRDPRDTD) shows a compositional bias: basic and acidic residues.

As to quaternary structure, interacts with CD45/PTPRC. In terms of processing, phosphorylated on tyrosine residues. As to expression, leukocyte-specific. Expressed in B- and T-cell lines, in spleen, thymus, and bone marrow of adult mice, and in embryos.

Its subcellular location is the membrane. This chain is Protein tyrosine phosphatase receptor type C-associated protein (Ptprcap), found in Mus musculus (Mouse).